We begin with the raw amino-acid sequence, 428 residues long: tRNA modification GTPase MnmE (428 aa).

R20, E76, and R116 together coordinate (6S)-5-formyl-5,6,7,8-tetrahydrofolate. One can recognise a TrmE-type G domain in the interval 212 to 351 (GFEVAIVGAP…LVAAIGERLL (140 aa)). N222 provides a ligand contact to K(+). Residues 222–227 (NAGKST), 241–247 (SEIAGTT), and 266–269 (DTAG) contribute to the GTP site. Residue S226 coordinates Mg(2+). The K(+) site is built by S241, I243, and T246. T247 is a binding site for Mg(2+). K428 provides a ligand contact to (6S)-5-formyl-5,6,7,8-tetrahydrofolate.

Belongs to the TRAFAC class TrmE-Era-EngA-EngB-Septin-like GTPase superfamily. TrmE GTPase family. As to quaternary structure, homodimer. Heterotetramer of two MnmE and two MnmG subunits. K(+) serves as cofactor.

Its subcellular location is the cytoplasm. Its function is as follows. Exhibits a very high intrinsic GTPase hydrolysis rate. Involved in the addition of a carboxymethylaminomethyl (cmnm) group at the wobble position (U34) of certain tRNAs, forming tRNA-cmnm(5)s(2)U34. This chain is tRNA modification GTPase MnmE, found in Cereibacter sphaeroides (strain ATCC 17029 / ATH 2.4.9) (Rhodobacter sphaeroides).